A 185-amino-acid polypeptide reads, in one-letter code: Jasmonate-induced protein homolog (185 aa).

The protein belongs to the jasmonate-induced protein family.

The protein is Jasmonate-induced protein homolog of Atriplex canescens (Fourwing saltbush).